We begin with the raw amino-acid sequence, 725 residues long: ATP-dependent DNA helicase II subunit 2 (725 aa).

The region spanning 232-478 is the Ku domain; sequence LTLGDPQKYP…QQAMSDYVDA (247 aa).

The protein belongs to the ku80 family. As to quaternary structure, heterodimer of mus-51/ku70 and mus-52/ku80.

Its subcellular location is the nucleus. It localises to the chromosome. The protein localises to the telomere. The enzyme catalyses ATP + H2O = ADP + phosphate + H(+). In terms of biological role, single-stranded DNA-dependent ATP-dependent helicase. Involved in non-homologous end joining (NHEJ) DNA double strand break repair. DNA-binding is sequence-independent but has a high affinity to nicks in double-stranded DNA and to the ends of duplex DNA. Binds to naturally occurring chromosomal ends, and therefore provides chromosomal end protection. Required also for telomere recombination to repair telomeric ends in the absence of telomerase. ku70, of the ku70/ku80 heterodimer, binds to the stem loop of tlc1, the RNA component of telomerase. Involved in telomere maintenance. Interacts with telomeric repeats and subtelomeric sequences thereby controlling telomere length and protecting against subtelomeric rearrangement. Maintains telomeric chromatin, which is involved in silencing the expression of genes located at the telomere. Required for mating-type switching. This Neurospora crassa (strain ATCC 24698 / 74-OR23-1A / CBS 708.71 / DSM 1257 / FGSC 987) protein is ATP-dependent DNA helicase II subunit 2 (mus-52).